The chain runs to 507 residues: Cytochrome P450 4X1 (507 aa).

Residues 14-34 form a helical membrane-spanning segment; the sequence is LHLALVFCLALVLMQAVKLYL. A heme-binding site is contributed by Cys452.

Belongs to the cytochrome P450 family. Requires heme as cofactor. Expressed at high levels in brain, mainly in neurons in different regions, including brain stem, hippocampus, cortex and cerebellum. Also expressed in cerebral vasculature. Not detected in kidney, nor liver.

It localises to the endoplasmic reticulum membrane. The protein resides in the microsome membrane. The enzyme catalyses N-(5Z,8Z,11Z,14Z-eicosatetraenoyl)-ethanolamine + reduced [NADPH--hemoprotein reductase] + O2 = N-(14,15-epoxy-5Z,8Z,11Z-eicosatrienoyl)-ethanolamine + oxidized [NADPH--hemoprotein reductase] + H2O + H(+). A cytochrome P450 monooxygenase that selectively catalyzes the epoxidation of the last double bond of the arachidonoyl moiety of anandamide, potentially modulating endocannabinoid signaling. Has no hydroxylase activity toward various fatty acids, steroids and prostaglandins. Mechanistically, uses molecular oxygen inserting one oxygen atom into a substrate, and reducing the second into a water molecule, with two electrons provided by NADPH via cytochrome P450 reductase (CPR; NADPH-ferrihemoprotein reductase). In Rattus norvegicus (Rat), this protein is Cytochrome P450 4X1.